The chain runs to 312 residues: 26S proteasome non-ATPase regulatory subunit 14 (312 aa).

Positions Val-33–Gln-168 constitute an MPN domain. Zn(2+) contacts are provided by His-115, His-117, and Asp-128. A JAMM motif motif is present at residues His-115–Asp-128.

It belongs to the peptidase M67A family. PSMD14 subfamily. In terms of assembly, component of the 19S regulatory cap of the 26S proteasome.

Its function is as follows. Metalloprotease component of the 26S proteasome that specifically cleaves 'Lys-63'-linked polyubiquitin chains. The 26S proteasome is involved in the ATP-dependent degradation of ubiquitinated proteins. The function of the 'Lys-63'-specific deubiquitination of the proteasome is unclear. The polypeptide is 26S proteasome non-ATPase regulatory subunit 14 (rpn-11) (Caenorhabditis elegans).